The primary structure comprises 431 residues: Enolase (431 aa).

Gln-167 contacts (2R)-2-phosphoglycerate. Glu-209 serves as the catalytic Proton donor. Residues Asp-246, Glu-289, and Asp-316 each contribute to the Mg(2+) site. Residues Lys-341, Arg-370, Ser-371, and Lys-392 each coordinate (2R)-2-phosphoglycerate. Lys-341 (proton acceptor) is an active-site residue.

Belongs to the enolase family. In terms of assembly, component of the RNA degradosome, a multiprotein complex involved in RNA processing and mRNA degradation. It depends on Mg(2+) as a cofactor.

The protein resides in the cytoplasm. It is found in the secreted. It localises to the cell surface. The enzyme catalyses (2R)-2-phosphoglycerate = phosphoenolpyruvate + H2O. The protein operates within carbohydrate degradation; glycolysis; pyruvate from D-glyceraldehyde 3-phosphate: step 4/5. In terms of biological role, catalyzes the reversible conversion of 2-phosphoglycerate (2-PG) into phosphoenolpyruvate (PEP). It is essential for the degradation of carbohydrates via glycolysis. The polypeptide is Enolase (Shewanella woodyi (strain ATCC 51908 / MS32)).